A 511-amino-acid chain; its full sequence is Anthranilate synthase component 1 (511 aa).

The segment at 1–36 (MTTHAAEAPTTDPQGAPGSQKTPDATEAEEAARATV) is disordered. A compositionally biased stretch (polar residues) spans 11–23 (TDPQGAPGSQKTP). Residues Ser-84 and 292–294 (PYM) each bind L-tryptophan. Chorismate is bound at residue 328–329 (GT). Glu-355 is a binding site for Mg(2+). Residues Tyr-443, Arg-463, 477–479 (GAG), and Gly-479 each bind chorismate. Position 492 (Glu-492) interacts with Mg(2+).

The protein belongs to the anthranilate synthase component I family. In terms of assembly, heterotetramer consisting of two non-identical subunits: a beta subunit (TrpG) and a large alpha subunit (TrpE). The cofactor is Mg(2+).

The catalysed reaction is chorismate + L-glutamine = anthranilate + pyruvate + L-glutamate + H(+). The protein operates within amino-acid biosynthesis; L-tryptophan biosynthesis; L-tryptophan from chorismate: step 1/5. Feedback inhibited by tryptophan. Its function is as follows. Part of a heterotetrameric complex that catalyzes the two-step biosynthesis of anthranilate, an intermediate in the biosynthesis of L-tryptophan. In the first step, the glutamine-binding beta subunit (TrpG) of anthranilate synthase (AS) provides the glutamine amidotransferase activity which generates ammonia as a substrate that, along with chorismate, is used in the second step, catalyzed by the large alpha subunit of AS (TrpE) to produce anthranilate. In the absence of TrpG, TrpE can synthesize anthranilate directly from chorismate and high concentrations of ammonia. The protein is Anthranilate synthase component 1 (trpE) of Streptomyces coelicolor (strain ATCC BAA-471 / A3(2) / M145).